The sequence spans 275 residues: Cell division protein FtsQ (275 aa).

A disordered region spans residues 1–20 (MRDLHKKKPRPVTQNRLKKP). At 1-38 (MRDLHKKKPRPVTQNRLKKPPKTCKPINYRGILKKTAK) the chain is on the cytoplasmic side. A helical membrane pass occupies residues 39-61 (VVGGAALISAVGCAGYGIYRIIA). At 62 to 275 (GTTFFKLERI…YSDKIIVKKV (214 aa)) the chain is on the periplasmic side. The POTRA domain maps to 66–134 (FKLERIEVSE…NTLSMQIAER (69 aa)).

It belongs to the FtsQ/DivIB family. FtsQ subfamily.

The protein localises to the cell inner membrane. Essential cell division protein. In Geotalea daltonii (strain DSM 22248 / JCM 15807 / FRC-32) (Geobacter daltonii), this protein is Cell division protein FtsQ.